The chain runs to 132 residues: Small ribosomal subunit protein uS8 (132 aa).

This sequence belongs to the universal ribosomal protein uS8 family. As to quaternary structure, part of the 30S ribosomal subunit. Contacts proteins S5 and S12.

In terms of biological role, one of the primary rRNA binding proteins, it binds directly to 16S rRNA central domain where it helps coordinate assembly of the platform of the 30S subunit. The protein is Small ribosomal subunit protein uS8 of Lactobacillus helveticus (strain DPC 4571).